The chain runs to 553 residues: Chaperonin GroEL 2 (553 aa).

ATP-binding positions include 29 to 32 (TLGP), 86 to 90 (DGTTT), G414, and D495.

It belongs to the chaperonin (HSP60) family. In terms of assembly, forms a cylinder of 14 subunits composed of two heptameric rings stacked back-to-back. Interacts with the co-chaperonin GroES.

Its subcellular location is the cytoplasm. It carries out the reaction ATP + H2O + a folded polypeptide = ADP + phosphate + an unfolded polypeptide.. Together with its co-chaperonin GroES, plays an essential role in assisting protein folding. The GroEL-GroES system forms a nano-cage that allows encapsulation of the non-native substrate proteins and provides a physical environment optimized to promote and accelerate protein folding. This is Chaperonin GroEL 2 from Gloeobacter violaceus (strain ATCC 29082 / PCC 7421).